Consider the following 100-residue polypeptide: ATP synthase subunit g 2, mitochondrial (100 aa).

It belongs to the ATPase g subunit family. As to quaternary structure, F-type ATPases have 2 components, CF(1) - the catalytic core - and CF(0) - the membrane proton channel. CF(0) seems to have nine subunits: a, b, c, d, e, f, g, F6 and 8 (or A6L).

It localises to the mitochondrion membrane. Mitochondrial membrane ATP synthase (F(1)F(0) ATP synthase or Complex V) produces ATP from ADP in the presence of a proton gradient across the membrane which is generated by electron transport complexes of the respiratory chain. F-type ATPases consist of two structural domains, F(1) - containing the extramembraneous catalytic core, and F(0) - containing the membrane proton channel, linked together by a central stalk and a peripheral stalk. During catalysis, ATP synthesis in the catalytic domain of F(1) is coupled via a rotary mechanism of the central stalk subunits to proton translocation. Part of the complex F(0) domain. Minor subunit located with subunit a in the membrane. In Homo sapiens (Human), this protein is ATP synthase subunit g 2, mitochondrial.